A 156-amino-acid chain; its full sequence is Sperm acrosome-associated protein 5 (156 aa).

The first 18 residues, 1-18 (MQVSGTIVVILMAANVEA), serve as a signal peptide directing secretion. One can recognise a C-type lysozyme domain in the interval 19-147 (KIYERCDLAK…SEWLRGCHMN (129 aa)). 4 disulfides stabilise this stretch: Cys24-Cys144, Cys48-Cys132, Cys82-Cys97, and Cys93-Cys111. Glu53 is a catalytic residue.

This sequence belongs to the glycosyl hydrolase 22 family.

The protein localises to the secreted. The enzyme catalyses Hydrolysis of (1-&gt;4)-beta-linkages between N-acetylmuramic acid and N-acetyl-D-glucosamine residues in a peptidoglycan and between N-acetyl-D-glucosamine residues in chitodextrins.. This chain is Sperm acrosome-associated protein 5 (SPACA5), found in Bos taurus (Bovine).